The sequence spans 104 residues: Iron-sulfur cluster assembly protein CyaY (104 aa).

It belongs to the frataxin family.

Its function is as follows. Involved in iron-sulfur (Fe-S) cluster assembly. May act as a regulator of Fe-S biogenesis. This Aeromonas hydrophila subsp. hydrophila (strain ATCC 7966 / DSM 30187 / BCRC 13018 / CCUG 14551 / JCM 1027 / KCTC 2358 / NCIMB 9240 / NCTC 8049) protein is Iron-sulfur cluster assembly protein CyaY.